The sequence spans 85 residues: MEVILDKRNEMEIVFEGETHTLCNVLRSILMEDEKVKAAAYSIDHPIVGEPQLYIRAGSPKKSLKAAAETLRDRCDEFRRLIESL.

This sequence belongs to the archaeal Rpo11/eukaryotic RPB11/RPC19 RNA polymerase subunit family. Part of the RNA polymerase complex.

It is found in the cytoplasm. It catalyses the reaction RNA(n) + a ribonucleoside 5'-triphosphate = RNA(n+1) + diphosphate. Its function is as follows. DNA-dependent RNA polymerase (RNAP) catalyzes the transcription of DNA into RNA using the four ribonucleoside triphosphates as substrates. This Methanothermobacter thermautotrophicus (strain ATCC 29096 / DSM 1053 / JCM 10044 / NBRC 100330 / Delta H) (Methanobacterium thermoautotrophicum) protein is DNA-directed RNA polymerase subunit Rpo11.